The primary structure comprises 532 residues: Probable galacturonosyltransferase 14 (532 aa).

Over 1-40 (MQLHISPSMRSITISSSNEFIDLMKIKVAARHISYRTLFH) the chain is Cytoplasmic. The chain crosses the membrane as a helical; Signal-anchor for type II membrane protein span at residues 41-61 (TILILAFLLPFVFILTAVVTL). At 62–532 (EGVNKCSSID…DFIKNCHILE (471 aa)) the chain is on the lumenal side. 4 N-linked (GlcNAc...) asparagine glycosylation sites follow: asparagine 305, asparagine 395, asparagine 444, and asparagine 519.

It belongs to the glycosyltransferase 8 family. Expressed in roots, inflorescences, siliques, leaves and stems. Accumulates in pollen grains.

The protein localises to the golgi apparatus membrane. It functions in the pathway glycan metabolism; pectin biosynthesis. Its function is as follows. May be involved in pectin and/or xylans biosynthesis in cell walls. Together with GAUT13, required for pollen tube growth, possibly through the regulation of pectin biosynthesis and repartition in the pollen tube wall. This chain is Probable galacturonosyltransferase 14, found in Arabidopsis thaliana (Mouse-ear cress).